Here is a 554-residue protein sequence, read N- to C-terminus: Urocanate hydratase (554 aa).

NAD(+) is bound by residues 51–52 (GG), Gln129, 175–177 (GMG), Glu195, 241–242 (NA), 262–266 (QTSAH), 272–273 (YL), and Tyr321. Cys409 is an active-site residue. Residue Gly491 coordinates NAD(+).

It belongs to the urocanase family. NAD(+) is required as a cofactor.

The protein resides in the cytoplasm. The catalysed reaction is 4-imidazolone-5-propanoate = trans-urocanate + H2O. The protein operates within amino-acid degradation; L-histidine degradation into L-glutamate; N-formimidoyl-L-glutamate from L-histidine: step 2/3. Its function is as follows. Catalyzes the conversion of urocanate to 4-imidazolone-5-propionate. This chain is Urocanate hydratase, found in Caulobacter vibrioides (strain ATCC 19089 / CIP 103742 / CB 15) (Caulobacter crescentus).